The sequence spans 538 residues: Dolichol kinase (538 aa).

The Lumenal portion of the chain corresponds to methionine 1 to glycine 18. Residues serine 19–tryptophan 39 traverse the membrane as a helical segment. Residues aspartate 40–arginine 74 lie on the Cytoplasmic side of the membrane. A helical transmembrane segment spans residues methionine 75–methionine 95. Residues lysine 96 to glycine 111 are Lumenal-facing. A helical transmembrane segment spans residues isoleucine 112–isoleucine 132. The Cytoplasmic segment spans residues threonine 133–arginine 134. Residues proline 135–methionine 155 traverse the membrane as a helical segment. The Lumenal portion of the chain corresponds to lysine 156–glutamate 163. The chain crosses the membrane as a helical span at residues valine 164 to leucine 184. Residues leucine 185 to cysteine 188 lie on the Cytoplasmic side of the membrane. Residues phenylalanine 189 to isoleucine 209 form a helical membrane-spanning segment. Over lysine 210–aspartate 224 the chain is Lumenal. Residues phenylalanine 225 to phenylalanine 245 traverse the membrane as a helical segment. Over valine 246–alanine 254 the chain is Cytoplasmic. The helical transmembrane segment at serine 255 to leucine 275 threads the bilayer. Topologically, residues histidine 276–arginine 297 are lumenal. Residues valine 298–glutamine 318 form a helical membrane-spanning segment. At asparagine 319–arginine 337 the chain is on the cytoplasmic side. The chain crosses the membrane as a helical span at residues lysine 338–leucine 354. Topologically, residues aspartate 355 to leucine 359 are lumenal. The helical transmembrane segment at tyrosine 360–arginine 380 threads the bilayer. The Cytoplasmic portion of the chain corresponds to isoleucine 381–serine 401. A helical transmembrane segment spans residues glycine 402–valine 422. Residues proline 423–arginine 436 are Lumenal-facing. The helical transmembrane segment at alanine 437–phenylalanine 457 threads the bilayer. Topologically, residues glycine 458–threonine 472 are cytoplasmic. The CTP-binding stretch occupies residues serine 459 to glutamate 474. Residues phenylalanine 473–phenylalanine 493 form a helical membrane-spanning segment. The Lumenal segment spans residues aspartate 494 to serine 495. Residues glycine 496 to leucine 516 form a helical membrane-spanning segment. Over glutamate 517–alanine 538 the chain is Cytoplasmic.

Belongs to the polyprenol kinase family.

The protein resides in the endoplasmic reticulum membrane. The catalysed reaction is a di-trans,poly-cis-dolichol + CTP = a di-trans,poly-cis-dolichyl phosphate + CDP + H(+). It functions in the pathway protein modification; protein glycosylation. Its function is as follows. Catalyzes CTP-mediated phosphorylation of dolichol, the terminal step in de novo dolichyl monophosphate (Dol-P) biosynthesis. Dol-P is a lipid carrier essential for the synthesis of N-linked and O-linked oligosaccharides and for GPI anchors. In Bos taurus (Bovine), this protein is Dolichol kinase (DOLK).